The chain runs to 488 residues: Calcium/calmodulin-dependent protein kinase type II subunit delta (488 aa).

Ala-2 is modified (N-acetylalanine). The region spanning 14–272 (YQLFEELGKG…ASEALKHPWI (259 aa)) is the Protein kinase domain. Residues 20 to 28 (LGKGAFSVV) and Lys-43 each bind ATP. Residue Asp-136 is the Proton acceptor of the active site. Residues 283–292 (HRQETVDCLK) form an autoinhibitory domain region. Residue Thr-287 is modified to Phosphothreonine; by autocatalysis. A calmodulin-binding region spans residues 291-301 (LKKFNARRKLK). Residues Thr-306 and Thr-307 each carry the phosphothreonine; by autocatalysis modification. Ser-315 carries the phosphoserine modification. Lys-317 carries the N6-acetyllysine modification. Residues Ser-318 and Ser-340 each carry the phosphoserine modification. Residues 325-350 (GVKKRKSSSSVQMMESTESSNTTIED) are disordered. Positions 332–347 (SSSVQMMESTESSNTT) are enriched in polar residues. Thr-341 carries the phosphothreonine modification. Ser-343 bears the Phosphoserine mark. A phosphothreonine mark is found at Thr-346 and Thr-347. Position 414 is a phosphoserine (Ser-414).

Belongs to the protein kinase superfamily. CAMK Ser/Thr protein kinase family. CaMK subfamily. As to quaternary structure, CAMK2 is composed of 4 different chains: alpha (CAMK2A), beta (CAMK2B), gamma (CAMK2G), and delta (CAMK2D). The different isoforms assemble into homo- or heteromultimeric holoenzymes composed of 12 subunits with two hexameric rings stacked one on top of the other. Interacts with RRAD and CACNB2. Autophosphorylation of Thr-287 following activation by Ca(2+)/calmodulin. Phosphorylation of Thr-287 locks the kinase into an activated state.

Its subcellular location is the cell membrane. It is found in the sarcolemma. It localises to the sarcoplasmic reticulum membrane. The enzyme catalyses L-seryl-[protein] + ATP = O-phospho-L-seryl-[protein] + ADP + H(+). It catalyses the reaction L-threonyl-[protein] + ATP = O-phospho-L-threonyl-[protein] + ADP + H(+). With respect to regulation, activated by Ca(2+)/calmodulin. Binding of calmodulin results in conformational change that relieves intrasteric autoinhibition and allows autophosphorylation of Thr-287 which turns the kinase in a constitutively active form and confers to the kinase a Ca(2+)-independent activity. Functionally, calcium/calmodulin-dependent protein kinase involved in the regulation of Ca(2+) homeostatis and excitation-contraction coupling (ECC) in heart by targeting ion channels, transporters and accessory proteins involved in Ca(2+) influx into the myocyte, Ca(2+) release from the sarcoplasmic reticulum (SR), SR Ca(2+) uptake and Na(+) and K(+) channel transport. Targets also transcription factors and signaling molecules to regulate heart function. In its activated form, is involved in the pathogenesis of dilated cardiomyopathy and heart failure. Contributes to cardiac decompensation and heart failure by regulating SR Ca(2+) release via direct phosphorylation of RYR2 Ca(2+) channel on 'Ser-2808'. In the nucleus, phosphorylates the MEF2 repressor HDAC4, promoting its nuclear export and binding to 14-3-3 protein, and expression of MEF2 and genes involved in the hypertrophic program. Is essential for left ventricular remodeling responses to myocardial infarction. In pathological myocardial remodeling acts downstream of the beta adrenergic receptor signaling cascade to regulate key proteins involved in ECC. Regulates Ca(2+) influx to myocytes by binding and phosphorylating the L-type Ca(2+) channel subunit beta-2 CACNB2. In addition to Ca(2+) channels, can target and regulate the cardiac sarcolemmal Na(+) channel Nav1.5/SCN5A and the K+ channel Kv4.3/KCND3, which contribute to arrhythmogenesis in heart failure. Phosphorylates phospholamban (PLN/PLB), an endogenous inhibitor of SERCA2A/ATP2A2, contributing to the enhancement of SR Ca(2+) uptake that may be important in frequency-dependent acceleration of relaxation (FDAR) and maintenance of contractile function during acidosis. May participate in the modulation of skeletal muscle function in response to exercise, by regulating SR Ca(2+) transport through phosphorylation of PLN/PLB and triadin, a ryanodine receptor-coupling factor. In response to interferon-gamma (IFN-gamma) stimulation, catalyzes phosphorylation of STAT1, stimulating the JAK-STAT signaling pathway. The chain is Calcium/calmodulin-dependent protein kinase type II subunit delta (CAMK2D) from Bos taurus (Bovine).